Here is a 558-residue protein sequence, read N- to C-terminus: Dihydroxy-acid dehydratase (558 aa).

A Mg(2+)-binding site is contributed by aspartate 81. [2Fe-2S] cluster is bound at residue cysteine 122. Residues aspartate 123 and lysine 124 each contribute to the Mg(2+) site. Lysine 124 carries the post-translational modification N6-carboxylysine. Cysteine 195 provides a ligand contact to [2Fe-2S] cluster. Position 447 (glutamate 447) interacts with Mg(2+). Residue serine 473 is the Proton acceptor of the active site.

The protein belongs to the IlvD/Edd family. Homodimer. It depends on [2Fe-2S] cluster as a cofactor. Requires Mg(2+) as cofactor.

It catalyses the reaction (2R)-2,3-dihydroxy-3-methylbutanoate = 3-methyl-2-oxobutanoate + H2O. The catalysed reaction is (2R,3R)-2,3-dihydroxy-3-methylpentanoate = (S)-3-methyl-2-oxopentanoate + H2O. Its pathway is amino-acid biosynthesis; L-isoleucine biosynthesis; L-isoleucine from 2-oxobutanoate: step 3/4. The protein operates within amino-acid biosynthesis; L-valine biosynthesis; L-valine from pyruvate: step 3/4. Its function is as follows. Functions in the biosynthesis of branched-chain amino acids. Catalyzes the dehydration of (2R,3R)-2,3-dihydroxy-3-methylpentanoate (2,3-dihydroxy-3-methylvalerate) into 2-oxo-3-methylpentanoate (2-oxo-3-methylvalerate) and of (2R)-2,3-dihydroxy-3-methylbutanoate (2,3-dihydroxyisovalerate) into 2-oxo-3-methylbutanoate (2-oxoisovalerate), the penultimate precursor to L-isoleucine and L-valine, respectively. In Bacillus pumilus (strain SAFR-032), this protein is Dihydroxy-acid dehydratase.